Here is a 1054-residue protein sequence, read N- to C-terminus: Desmoglein-1 (1054 aa).

A signal peptide spans 1-23; the sequence is MNWHFLRTATVLLIFLVVVEINS. A propeptide spanning residues 24–49 is cleaved from the precursor; sequence EFRIQVRDYNTKNGTIKWHSIRRQKR. Residues Asn36, Asn110, and Asn180 are each glycosylated (N-linked (GlcNAc...) asparagine). 4 consecutive Cadherin domains span residues 50-157, 158-269, 270-389, and 386-493; these read EWIK…PPVF, SMST…IPYM, EPSS…RPGS, and RPGS…KDSE. The Extracellular segment spans residues 50–566; it reads EWIKFAAACR…NLSDNVHFGP (517 aa). Positions 487–554 are disordered; the sequence is GWEKDSEKVT…QSNNNHQELG (68 aa). The segment covering 496 to 507 has biased composition (low complexity); the sequence is TSSQNSGSSTGD. A compositionally biased stretch (gly residues) spans 508-517; that stretch reads SSGGTGGGGR. Positions 523–534 are enriched in low complexity; the sequence is GDTTTNTGGKTS. The span at 542-554 shows a compositional bias: polar residues; the sequence is TQTQSNNNHQELG. A glycan (N-linked (GlcNAc...) asparagine) is linked at Asn557. A helical membrane pass occupies residues 567–587; the sequence is AGIGLLIMGFLVLGLVPFLLM. At 588-1054 the chain is on the cytoplasmic side; sequence CCDCGGAPGA…TKYSTVQYTK (467 aa). 5 Desmoglein repeat repeats span residues 830-856, 857-886, 887-916, 917-944, and 945-973; these read TYPS…TVTE, SYTT…ERVV, GPIS…ERVI, APSS…ERVI, and RPAS…ERVV. The interval 1018-1040 is disordered; the sequence is GHVRSSSDHHFSQTLGSASPSTA. Over residues 1029-1040 the composition is skewed to polar residues; that stretch reads SQTLGSASPSTA.

In terms of assembly, binds to JUP/plakoglobin. Interacts with PKP2. Interacts with DSC3; there is evidence to suggest that the interaction promotes cell-cell adhesion of keratinocytes.

Its subcellular location is the cell membrane. The protein resides in the cell junction. It is found in the desmosome. The protein localises to the cytoplasm. It localises to the nucleus. In terms of biological role, component of intercellular desmosome junctions. Involved in the interaction of plaque proteins and intermediate filaments mediating cell-cell adhesion. This is Desmoglein-1 (DSG1) from Canis lupus familiaris (Dog).